The chain runs to 549 residues: Cation/acetate symporter ActP (549 aa).

13 helical membrane passes run 33-53, 76-96, 103-123, 149-169, 183-203, 206-226, 262-282, 303-323, 355-375, 404-424, 428-448, 463-483, and 493-513; these read WQAI…TYWA, GLAI…SALV, GLIY…LIAE, LSAC…MVGA, IAVV…GMLA, WVQI…AFMV, ISAL…PHIL, GFMG…IMLV, LFLG…VAGL, VSKI…ILFE, IAFM…PIIL, IGGW…PTIW, and IFPY…GIWF.

The protein belongs to the sodium:solute symporter (SSF) (TC 2.A.21) family.

It localises to the cell inner membrane. Transports acetate. The polypeptide is Cation/acetate symporter ActP (Enterobacter sp. (strain 638)).